A 63-amino-acid polypeptide reads, in one-letter code: uncharacterized protein (63 aa).

Transmembrane regions (helical) follow at residues 3-23 and 42-62; these read VFLI…VYYI and ALVC…TKLL.

It localises to the cell membrane. This is an uncharacterized protein from Bacillus subtilis (strain 168).